We begin with the raw amino-acid sequence, 768 residues long: DNA replication licensing factor MCM3 homolog 3 (768 aa).

The MCM domain occupies Thr290–Ala497. Residue Gly340–Ser347 coordinates ATP. The short motif at Ser472 to Asp475 is the Arginine finger element. Residues Glu661 to Ala670 show a composition bias toward basic and acidic residues. The segment at Glu661–Val690 is disordered. Positions Ala672 to Ser682 are enriched in gly residues.

This sequence belongs to the MCM family.

The protein localises to the nucleus. It carries out the reaction ATP + H2O = ADP + phosphate + H(+). Acts as a factor that allows the DNA to undergo a single round of replication per cell cycle. Required for DNA replication and cell proliferation. May act as a component of the MCM complex which is the putative replicative helicase of the replication licensing system in eukaryotic cells. The sequence is that of DNA replication licensing factor MCM3 homolog 3 (ROA3) from Zea mays (Maize).